A 76-amino-acid polypeptide reads, in one-letter code: Kappa-actitoxin-Avd4c (76 aa).

A signal peptide spans 1-19 (MNKALFLCLVVLCAAVVFA). Positions 20-31 (AEDLQKAKHAPF) are excised as a propeptide. 3 cysteine pairs are disulfide-bonded: Cys37-Cys72, Cys39-Cys65, and Cys55-Cys73.

The protein belongs to the sea anemone type 3 (BDS) potassium channel toxin family. Moderately expressed in the ectodermal tissue from the distal and proximal tentacles, body wall, and oral disk.

The protein localises to the secreted. It is found in the nematocyst. Functionally, blocks Kv3 voltage-gated potassium channels. Reduces blood pressure. This chain is Kappa-actitoxin-Avd4c, found in Anemonia viridis (Snakelocks anemone).